Here is a 191-residue protein sequence, read N- to C-terminus: Pyridoxal 5'-phosphate synthase subunit PdxT (191 aa).

52-54 serves as a coordination point for L-glutamine; it reads GES. The active-site Nucleophile is Cys-81. L-glutamine-binding positions include Arg-108 and 136-137; that span reads IR. Catalysis depends on charge relay system residues His-172 and Glu-174.

The protein belongs to the glutaminase PdxT/SNO family. In the presence of PdxS, forms a dodecamer of heterodimers. Only shows activity in the heterodimer.

It carries out the reaction aldehydo-D-ribose 5-phosphate + D-glyceraldehyde 3-phosphate + L-glutamine = pyridoxal 5'-phosphate + L-glutamate + phosphate + 3 H2O + H(+). It catalyses the reaction L-glutamine + H2O = L-glutamate + NH4(+). It participates in cofactor biosynthesis; pyridoxal 5'-phosphate biosynthesis. In terms of biological role, catalyzes the hydrolysis of glutamine to glutamate and ammonia as part of the biosynthesis of pyridoxal 5'-phosphate. The resulting ammonia molecule is channeled to the active site of PdxS. The protein is Pyridoxal 5'-phosphate synthase subunit PdxT of Actinobacillus pleuropneumoniae serotype 7 (strain AP76).